A 196-amino-acid polypeptide reads, in one-letter code: MYEYINGLITNIYPAYLVIADRSGVGYKLFVANPYRFEQNVESHVYVEQIVRENEMTLYGFIDENEKYLFNKLLNVSGIGPKSALAILASDDAAGLVTAVANDDASYLTQFPGVGKKTAQQIVLDLKGKLDDLALSAGMTVETVPTTDNQALADALAALESLGYSAKDVAKLQTVLANQKDTTDGYIRSALKFLVK.

Residues 1–62 (MYEYINGLIT…ENEMTLYGFI (62 aa)) form a domain I region. The domain II stretch occupies residues 63–141 (DENEKYLFNK…DLALSAGMTV (79 aa)). The flexible linker stretch occupies residues 142–146 (ETVPT). Residues 147–196 (TDNQALADALAALESLGYSAKDVAKLQTVLANQKDTTDGYIRSALKFLVK) are domain III.

This sequence belongs to the RuvA family. As to quaternary structure, homotetramer. Forms an RuvA(8)-RuvB(12)-Holliday junction (HJ) complex. HJ DNA is sandwiched between 2 RuvA tetramers; dsDNA enters through RuvA and exits via RuvB. An RuvB hexamer assembles on each DNA strand where it exits the tetramer. Each RuvB hexamer is contacted by two RuvA subunits (via domain III) on 2 adjacent RuvB subunits; this complex drives branch migration. In the full resolvosome a probable DNA-RuvA(4)-RuvB(12)-RuvC(2) complex forms which resolves the HJ.

The protein localises to the cytoplasm. Functionally, the RuvA-RuvB-RuvC complex processes Holliday junction (HJ) DNA during genetic recombination and DNA repair, while the RuvA-RuvB complex plays an important role in the rescue of blocked DNA replication forks via replication fork reversal (RFR). RuvA specifically binds to HJ cruciform DNA, conferring on it an open structure. The RuvB hexamer acts as an ATP-dependent pump, pulling dsDNA into and through the RuvAB complex. HJ branch migration allows RuvC to scan DNA until it finds its consensus sequence, where it cleaves and resolves the cruciform DNA. The chain is Holliday junction branch migration complex subunit RuvA from Leuconostoc citreum (strain KM20).